The chain runs to 520 residues: Cytochrome b5 reductase 4 (520 aa).

Met1 carries the post-translational modification N-acetylmethionine. A compositionally biased stretch (low complexity) spans 1–16 (MLNVPSQSFPGPSSQQ). The tract at residues 1-27 (MLNVPSQSFPGPSSQQRVASGGRSKVP) is disordered. A Cytochrome b5 heme-binding domain is found at 54–130 (LIEVTEEELK…LKECLVGRMA (77 aa)). Positions 89 and 112 each coordinate heme. The region spanning 164-255 (PSSPSYDWFQ…KENTSWKCLG (92 aa)) is the CS domain. The FAD-binding FR-type domain occupies 272 to 384 (LFYRKCQLVS…SNPEGNFIIS (113 aa)). Residues 364–379 (DQLQIGDYVSVSNPEG) and 391–423 (DLFLLAAGTGFTPMVKVLNYALTNIPSLRKVKL) each bind FAD.

It belongs to the flavoprotein pyridine nucleotide cytochrome reductase family. It depends on FAD as a cofactor.

It localises to the endoplasmic reticulum. The catalysed reaction is 2 Fe(III)-[cytochrome b5] + NADH = 2 Fe(II)-[cytochrome b5] + NAD(+) + H(+). Its function is as follows. NADH-cytochrome b5 reductase involved in endoplasmic reticulum stress response pathway. Plays a critical role in protecting pancreatic beta-cells against oxidant stress, possibly by protecting the cell from excess buildup of reactive oxygen species (ROS). In Bos taurus (Bovine), this protein is Cytochrome b5 reductase 4 (CYB5R4).